The primary structure comprises 1235 residues: ATP-dependent helicase/nuclease subunit A (1235 aa).

The 471-residue stretch at Ser12–Arg482 folds into the UvrD-like helicase ATP-binding domain. Position 33–40 (Ala33–Thr40) interacts with ATP. A UvrD-like helicase C-terminal domain is found at Ala509–Gly800.

Belongs to the helicase family. AddA subfamily. As to quaternary structure, heterodimer of AddA and AddB/RexB. The cofactor is Mg(2+).

It catalyses the reaction Couples ATP hydrolysis with the unwinding of duplex DNA by translocating in the 3'-5' direction.. The catalysed reaction is ATP + H2O = ADP + phosphate + H(+). Its function is as follows. The heterodimer acts as both an ATP-dependent DNA helicase and an ATP-dependent, dual-direction single-stranded exonuclease. Recognizes the chi site generating a DNA molecule suitable for the initiation of homologous recombination. The AddA nuclease domain is required for chi fragment generation; this subunit has the helicase and 3' -&gt; 5' nuclease activities. The protein is ATP-dependent helicase/nuclease subunit A of Listeria monocytogenes serotype 4b (strain F2365).